The following is a 282-amino-acid chain: 2-dehydro-3-deoxyphosphooctonate aldolase (282 aa).

Belongs to the KdsA family.

The protein localises to the cytoplasm. The catalysed reaction is D-arabinose 5-phosphate + phosphoenolpyruvate + H2O = 3-deoxy-alpha-D-manno-2-octulosonate-8-phosphate + phosphate. The protein operates within carbohydrate biosynthesis; 3-deoxy-D-manno-octulosonate biosynthesis; 3-deoxy-D-manno-octulosonate from D-ribulose 5-phosphate: step 2/3. It participates in bacterial outer membrane biogenesis; lipopolysaccharide biosynthesis. The sequence is that of 2-dehydro-3-deoxyphosphooctonate aldolase from Agrobacterium fabrum (strain C58 / ATCC 33970) (Agrobacterium tumefaciens (strain C58)).